We begin with the raw amino-acid sequence, 938 residues long: Glutamate receptor 3.1 (938 aa).

A signal peptide spans 1 to 20 (MKFIFYLFSIFCCLCSCAQS). Residues 21–588 (QNISGRPDAV…GGWAFLQPFT (568 aa)) lie on the Extracellular side of the membrane. Asn-22, Asn-39, Asn-59, Asn-340, Asn-418, Asn-436, and Asn-551 each carry an N-linked (GlcNAc...) asparagine glycan. A helical transmembrane segment spans residues 589-609 (IKMWTVTGLFFLIIGTVVWML). The Cytoplasmic portion of the chain corresponds to 610–618 (EHRINDEFR). Residues 619-639 (GPPAKQLITVFWFSFSTLFFA) traverse the membrane as a helical segment. Residues 640-650 (HREDTRSTLGR) are Cytoplasmic-facing. The chain crosses the membrane as a helical span at residues 651-671 (FVIIIWLFVVLIIQSSYTASL). Residues 672–830 (TSILTVQQLT…ELDQDPDRLD (159 aa)) are Extracellular-facing. The helical transmembrane segment at 831-851 (VYSFSALFLICGLACIFALAI) threads the bilayer. The Cytoplasmic portion of the chain corresponds to 852–938 (HACNLFYQYS…SGSGSTTASC (87 aa)). The interval 906–938 (AAKEKASGLGGSGGSMSGVSFTSSGSGSTTASC) is disordered. Positions 922-938 (SGVSFTSSGSGSTTASC) are enriched in low complexity.

This sequence belongs to the glutamate-gated ion channel (TC 1.A.10.1) family. As to quaternary structure, may form homomultimers. As to expression, expressed at low levels in roots and leaves.

Its subcellular location is the membrane. Its function is as follows. Glutamate-gated receptor that probably acts as a non-selective cation channel. Involved in root development. May regulate cell proliferation and cell death in the root apex. This chain is Glutamate receptor 3.1 (GLR3.1), found in Oryza sativa subsp. japonica (Rice).